Consider the following 295-residue polypeptide: Aspartate carbamoyltransferase catalytic subunit (295 aa).

Carbamoyl phosphate is bound by residues Arg54 and Thr55. Lys82 contributes to the L-aspartate binding site. Residues Arg104, His132, and Gln135 each contribute to the carbamoyl phosphate site. L-aspartate contacts are provided by Arg165 and Arg218. Residues Gly257 and Pro258 each contribute to the carbamoyl phosphate site.

The protein belongs to the aspartate/ornithine carbamoyltransferase superfamily. ATCase family. As to quaternary structure, heterododecamer (2C3:3R2) of six catalytic PyrB chains organized as two trimers (C3), and six regulatory PyrI chains organized as three dimers (R2).

It carries out the reaction carbamoyl phosphate + L-aspartate = N-carbamoyl-L-aspartate + phosphate + H(+). The protein operates within pyrimidine metabolism; UMP biosynthesis via de novo pathway; (S)-dihydroorotate from bicarbonate: step 2/3. Catalyzes the condensation of carbamoyl phosphate and aspartate to form carbamoyl aspartate and inorganic phosphate, the committed step in the de novo pyrimidine nucleotide biosynthesis pathway. This Wolbachia pipientis wMel protein is Aspartate carbamoyltransferase catalytic subunit.